The chain runs to 479 residues: UDP-glycosyltransferase 71B6 (479 aa).

Residues serine 275, 342–344, 359–367, and 381–384 each bind UDP-alpha-D-glucose; these read AEQ, HGGWNSTLE, and YAEQ.

This sequence belongs to the UDP-glycosyltransferase family.

In terms of biological role, glucosyltransferase that glucosylates the (+) enantiomer of abscisic acid ((+)-ABA). Is not active on structural analogs with alterations to the 8'- and 9'- methyl groups. The protein is UDP-glycosyltransferase 71B6 (UGT71B6) of Arabidopsis thaliana (Mouse-ear cress).